The following is a 78-amino-acid chain: Small ribosomal subunit protein bS20 (78 aa).

Belongs to the bacterial ribosomal protein bS20 family.

Functionally, binds directly to 16S ribosomal RNA. The sequence is that of Small ribosomal subunit protein bS20 from Streptococcus pneumoniae serotype 2 (strain D39 / NCTC 7466).